Here is a 462-residue protein sequence, read N- to C-terminus: MLHIHNSLTQRKERFEPIQPGHVRMYVCGMTVYDYCHLGHARALVVFDMVARYLRHLGYRVTFVRNITDIDDKIIRRAAELGEPMGAVTERFIRAMHEDAEALGVLPPDHEPRATGHIDDIIAMIERLVERGHAYVADDGDVYFAVSSYPEYGKLSGERQEDLRAGARVEVDEGKRDPVDFALWKAARPGEPAWPSPWGEGRPGWHIECSAMSTQVLGDHFDIHGGGLDLKFPHHENEIAQSECATGHPFVNYWMHNGHVRINDEKMAKSLGNFFTVREVLSEHRAEAVRLFLLSSHYRSPLNYSLDGLRQAQGALERLYLALRGLPEAPVPEADPQGFRARFHAAMDDDFNTPEALAVLFELAREVNRLRQGDDDAGAAAPGALLRVLGGVLGLLQDDPERFLRGGDAGGDEDAEIDALVARRTEARKNRDFAEADRIRDELAERGIILEDGPQGTTWRRE.

Residue Cys-28 participates in Zn(2+) binding. A 'HIGH' region motif is present at residues Met-30–His-40. Zn(2+) is bound by residues Cys-209, His-234, and Glu-238. The 'KMSKS' region motif lies at Lys-266 to Ser-270. Lys-269 is an ATP binding site.

It belongs to the class-I aminoacyl-tRNA synthetase family. As to quaternary structure, monomer. Requires Zn(2+) as cofactor.

The protein localises to the cytoplasm. The catalysed reaction is tRNA(Cys) + L-cysteine + ATP = L-cysteinyl-tRNA(Cys) + AMP + diphosphate. This chain is Cysteine--tRNA ligase, found in Alkalilimnicola ehrlichii (strain ATCC BAA-1101 / DSM 17681 / MLHE-1).